We begin with the raw amino-acid sequence, 270 residues long: Tetraspanin-17 (270 aa).

Residues 1 to 19 (MPGKHQQFQDPEVGCCGKY) lie on the Cytoplasmic side of the membrane. Residues 20 to 40 (FLFGFNIVFWVLGALFLAIGL) form a helical membrane-spanning segment. Topologically, residues 41–63 (WAWGEKGVLSNISGLTDLGGLDP) are extracellular. N-linked (GlcNAc...) asparagine glycosylation occurs at Asn51. Residues 64–84 (VWLFVVIGGIMSVLGFAGCIG) form a helical membrane-spanning segment. Over 85 to 94 (ALRENTFLLK) the chain is Cytoplasmic. Residues 95–115 (FFSVFLGLIFFLELAAGILAF) traverse the membrane as a helical segment. The Extracellular portion of the chain corresponds to 116 to 234 (VFKDWIRDQL…GQFEKWLQDN (119 aa)). Cystine bridges form between Cys155–Cys223, Cys156–Cys188, Cys172–Cys182, and Cys189–Cys202. Residue Asn171 is glycosylated (N-linked (GlcNAc...) asparagine). Residues 235 to 255 (LIVVAGVLVAIALLQICGICL) form a helical membrane-spanning segment. Residues 256 to 270 (AQNLVSDIEAVKANW) lie on the Cytoplasmic side of the membrane.

Belongs to the tetraspanin (TM4SF) family. In terms of assembly, interacts with ADAM10; the interaction influences ADAM10 substrate specificity, endocytosis and turnover.

The protein localises to the cell membrane. Its function is as follows. Part of TspanC8 subgroup, composed of 6 members that interact with the transmembrane metalloprotease ADAM10. This interaction is required for ADAM10 exit from the endoplasmic reticulum and for enzymatic maturation and trafficking to the cell surface as well as substrate specificity. Different TspanC8/ADAM10 complexes have distinct substrates. Seems to regulate VE-cadherin expression in endothelial cells probably through interaction with ADAM10, promoting leukocyte transmigration. The protein is Tetraspanin-17 (Tspan17) of Rattus norvegicus (Rat).